The sequence spans 192 residues: Protein ORF45 (192 aa).

Plays a role in the expression of ORF41, which itself is required for late gene expression. In Autographa californica nuclear polyhedrosis virus (AcMNPV), this protein is Protein ORF45.